The chain runs to 256 residues: DNA repair protein RecO (256 aa).

The protein belongs to the RecO family.

Its function is as follows. Involved in DNA repair and RecF pathway recombination. The polypeptide is DNA repair protein RecO (Delftia acidovorans (strain DSM 14801 / SPH-1)).